A 236-amino-acid chain; its full sequence is uncharacterized protein (236 aa).

Positions 1–23 are cleaved as a signal peptide; the sequence is MRRILSILVFAIMLAGCSSNAST. The segment at 22 to 62 is disordered; the sequence is STEKQHAGGEKTVKAEPQSTSSQKDSTDDYQPNSQVTDDRT. The span at 24-35 shows a compositional bias: basic and acidic residues; sequence EKQHAGGEKTVK.

This is an uncharacterized protein from Bacillus subtilis (strain 168).